A 966-amino-acid polypeptide reads, in one-letter code: Regulator of G-protein signaling 3 (966 aa).

In terms of domain architecture, PDZ spans 18-95 (QITIRRGKDG…EIILLVWRVV (78 aa)). A disordered region spans residues 115-135 (THDLLSPPNKREKNCTHGAPV). At Arg-167 the chain carries Omega-N-methylarginine. 2 disordered regions span residues 403 to 618 (EADE…TGAV) and 637 to 704 (YSQL…RVQN). 2 stretches are compositionally biased toward polar residues: residues 527 to 548 (PETS…TELP) and 576 to 594 (SSAS…SSLG). The span at 649 to 675 (GEDEDAEEGEEGGEGEEDEEDDTSDDN) shows a compositional bias: acidic residues. Basic and acidic residues predominate over residues 676–686 (YGDRSEAKRSS). Phosphoserine is present on residues Ser-712, Ser-715, Ser-747, and Ser-776. The segment at 806 to 830 (FRRRNESPGAQPASKTDKTTKSFKP) is disordered. A compositionally biased stretch (basic and acidic residues) spans 820–830 (KTDKTTKSFKP). The region spanning 841–966 (SLEKLLLHKY…INQKKMSPPL (126 aa)) is the RGS domain.

In terms of assembly, binds the GNB1-GNG2 heterodimer. Binds EFNB1 and EFNB2. Phosphorylated by cyclic GMP-dependent protein kinase. In terms of processing, ISGylated. As to expression, detected in embryos from E8.5-16.5 in cortical ventricular zone, dorsal root ganglia and cerebellar primordia. Isoform 3 is detected in testis and in spermatocytes from newborn mice. Levels increase and reach a maximum after 21 days; after this they decrease again. Long isoforms are widely expressed.

Its subcellular location is the cytoplasm. The protein resides in the cell membrane. It localises to the nucleus. Functionally, down-regulates signaling from heterotrimeric G-proteins by increasing the GTPase activity of the alpha subunits, thereby driving them into their inactive GDP-bound form. Down-regulates G-protein-mediated release of inositol phosphates and activation of MAP kinases. The sequence is that of Regulator of G-protein signaling 3 (Rgs3) from Mus musculus (Mouse).